A 312-amino-acid chain; its full sequence is Glyoxylate/hydroxypyruvate reductase A (312 aa).

Residue Arg-227 is part of the active site. His-275 acts as the Proton donor in catalysis.

It belongs to the D-isomer specific 2-hydroxyacid dehydrogenase family. GhrA subfamily.

The protein localises to the cytoplasm. It catalyses the reaction glycolate + NADP(+) = glyoxylate + NADPH + H(+). The catalysed reaction is (R)-glycerate + NAD(+) = 3-hydroxypyruvate + NADH + H(+). It carries out the reaction (R)-glycerate + NADP(+) = 3-hydroxypyruvate + NADPH + H(+). Functionally, catalyzes the NADPH-dependent reduction of glyoxylate and hydroxypyruvate into glycolate and glycerate, respectively. In Escherichia coli O6:K15:H31 (strain 536 / UPEC), this protein is Glyoxylate/hydroxypyruvate reductase A.